The sequence spans 459 residues: ATP synthase subunit beta (459 aa).

148–155 (GGAGVGKT) is a binding site for ATP.

The protein belongs to the ATPase alpha/beta chains family. As to quaternary structure, F-type ATPases have 2 components, CF(1) - the catalytic core - and CF(0) - the membrane proton channel. CF(1) has five subunits: alpha(3), beta(3), gamma(1), delta(1), epsilon(1). CF(0) has three main subunits: a(1), b(2) and c(9-12). The alpha and beta chains form an alternating ring which encloses part of the gamma chain. CF(1) is attached to CF(0) by a central stalk formed by the gamma and epsilon chains, while a peripheral stalk is formed by the delta and b chains.

The protein resides in the cell inner membrane. It carries out the reaction ATP + H2O + 4 H(+)(in) = ADP + phosphate + 5 H(+)(out). Its function is as follows. Produces ATP from ADP in the presence of a proton gradient across the membrane. The catalytic sites are hosted primarily by the beta subunits. The protein is ATP synthase subunit beta of Ruthia magnifica subsp. Calyptogena magnifica.